The sequence spans 88 residues: Small ribosomal subunit protein uS15 (88 aa).

The protein belongs to the universal ribosomal protein uS15 family. As to quaternary structure, part of the 30S ribosomal subunit. Forms a bridge to the 50S subunit in the 70S ribosome, contacting the 23S rRNA.

Functionally, one of the primary rRNA binding proteins, it binds directly to 16S rRNA where it helps nucleate assembly of the platform of the 30S subunit by binding and bridging several RNA helices of the 16S rRNA. Forms an intersubunit bridge (bridge B4) with the 23S rRNA of the 50S subunit in the ribosome. The sequence is that of Small ribosomal subunit protein uS15 from Flavobacterium psychrophilum (strain ATCC 49511 / DSM 21280 / CIP 103535 / JIP02/86).